Consider the following 1749-residue polypeptide: Intraflagellar transport protein 172 homolog (1749 aa).

N-acetylmethionine is present on M1. K4 participates in a covalent cross-link: Glycyl lysine isopeptide (Lys-Gly) (interchain with G-Cter in SUMO1). WD repeat units follow at residues 14-53 (DGAAKVTCMAWSQNNAKFAVCTVDRVVLLYDEHGERRDKF), 64-103 (RKSYMVKGMAFSPDSTKIAIGQTDNIIYVYKIGEDWGDKK), 110-148 (IQTSAVTCLQWPAEYVIVFGLAEGKVRLANTKTNKSSTI), 150-191 (GTES…ESQG), 195-233 (NHPCPPYALAWATNSIVAAGCDRRIVAYGKEGHVLQTFD), 238-278 (PQER…WEEA), 284-323 (ANLYTVTALAWKRDGSRLCAGTLCGGVEQFDCCLRRSIYK), 483-520 (SHESRVDWLELNETGHKLLFRDRKLRLHLYDIESCSKT), and 521-559 (MILNFCSYVQWVPGSDVLVAQNRNSLCVWYNIEAPERVT). A TPR 1 repeat occupies 593–624 (DEGLIEFGTAIDDGNYTRATAFLETLEMTPET). Residue R672 is modified to Omega-N-methylarginine. 13 TPR repeats span residues 692–725 (EKNYKLAEMIFLEQNAVEEAMDMYQELHRWEECI), 809–842 (GELYERAGDLFEKIRNPQRALECYCKGNAFMKAV), 854–887 (VRLEEAWGDHLVQQKQLDAAINHYIEARCSIKAI), 912–945 (SKYYPRVAQHYASLQEYEIAEELYTKGDRTKDAI), 947–970 (MYTQAGRWEQAHKLAMKCMRPEDV), 971–1004 (SVLYITQAQEMEKQGKYREAERLYVTVEEPDLAI), 1042–1075 (EGRLQEAEYHYLEAQEWKATVNMYRSSGLWEEAY), 1142–1175 (PEIHLKYAMYLEDEGKFEEAEAEFIRAGKPKEAV), 1276–1309 (VEGLVEQARQWEQAGEYSRAVDCYLKVRDSGSSG), 1345–1378 (IGKHSAAAELYLNLDLVKEAIDAFIEGEEWNKAK), 1411–1445 (GVDVVAALDLYVEQGQWDKCIETATKQNYKILHKY), 1447–1477 (ALYATHLIREGGYAQALALYVQHGAPANPQN), and 1574–1607 (DKAFYEAGTAAKEVGWENMAFIFLNRFLDLTDAI).

Belongs to the IFT172 family. As to quaternary structure, interacts with IFT88. Interacts with IFT57. Interacts with RABL2/RABL2A; binds preferentially to GDP-bound RABL2. In terms of tissue distribution, co-localizes with RABL2/RABL2A in the midpiece of elongated spermatids within the testis (at protein level). Expressed in the flagellum of elongated spermatids and sperm in the testis lumen (at protein level).

The protein localises to the cell projection. Its subcellular location is the cilium. Its function is as follows. Required for the maintenance and formation of cilia. Plays an indirect role in hedgehog (Hh) signaling, cilia being required for all activity of the hedgehog pathway. In Mus musculus (Mouse), this protein is Intraflagellar transport protein 172 homolog (Ift172).